Consider the following 95-residue polypeptide: Large ribosomal subunit protein bL25 (95 aa).

It belongs to the bacterial ribosomal protein bL25 family. As to quaternary structure, part of the 50S ribosomal subunit; part of the 5S rRNA/L5/L18/L25 subcomplex. Contacts the 5S rRNA. Binds to the 5S rRNA independently of L5 and L18.

Functionally, this is one of the proteins that binds to the 5S RNA in the ribosome where it forms part of the central protuberance. The chain is Large ribosomal subunit protein bL25 from Chromobacterium violaceum (strain ATCC 12472 / DSM 30191 / JCM 1249 / CCUG 213 / NBRC 12614 / NCIMB 9131 / NCTC 9757 / MK).